A 31-amino-acid polypeptide reads, in one-letter code: Relaxin B chain (31 aa).

Gln-1 carries the post-translational modification Pyrrolidone carboxylic acid.

This sequence belongs to the insulin family. As to quaternary structure, heterodimer of a B chain and an A chain linked by two disulfide bonds.

It localises to the secreted. In terms of biological role, relaxin is an ovarian hormone that acts with estrogen to produce dilatation of the birth canal in many mammals. The chain is Relaxin B chain from Phocoenoides dalli dalli (Dall's porpoise).